The chain runs to 396 residues: Ribosomal RNA large subunit methyltransferase I (396 aa).

One can recognise a PUA domain in the interval 2-79 (AIRIKLKPGR…REEEIDREFF (78 aa)).

The protein belongs to the methyltransferase superfamily. RlmI family.

It is found in the cytoplasm. It catalyses the reaction cytidine(1962) in 23S rRNA + S-adenosyl-L-methionine = 5-methylcytidine(1962) in 23S rRNA + S-adenosyl-L-homocysteine + H(+). Its function is as follows. Specifically methylates the cytosine at position 1962 (m5C1962) of 23S rRNA. The polypeptide is Ribosomal RNA large subunit methyltransferase I (Shewanella oneidensis (strain ATCC 700550 / JCM 31522 / CIP 106686 / LMG 19005 / NCIMB 14063 / MR-1)).